The primary structure comprises 1026 residues: Multidrug resistance protein MdtC (1026 aa).

11 helical membrane-spanning segments follow: residues 15-35 (ILIAAAITLCGILGFRLLPVA), 333-353 (EVEETLAISVALVILVVFLFL), 360-380 (LIPAVAVPVSLIGTFAAMYLC), 387-407 (LSLMALTIATGFVVDDAIVVL), 431-451 (VGFTVISMSLSLVAVFLPLLL), 463-483 (FAVTLSVAIGISLVVSLTLTP), 528-548 (LVGVVFLGTVALNIWLYIAIP), 853-873 (LILIVAAIATVYIVLGILYES), 897-917 (LFNAPFSLIALIGIMLLIGIV), 953-973 (PIMMTTLAALFGALPLVLSGG), and 984-1004 (ITIVGGLVMSQLLTLYTTPVV).

It belongs to the resistance-nodulation-cell division (RND) (TC 2.A.6) family. MdtC subfamily. In terms of assembly, part of a tripartite efflux system composed of MdtA, MdtB and MdtC. MdtC forms a heteromultimer with MdtB.

Its subcellular location is the cell inner membrane. The protein is Multidrug resistance protein MdtC of Salmonella agona (strain SL483).